A 102-amino-acid polypeptide reads, in one-letter code: MSFLFGGNNRSVEGSVDPAKIEMAVAELDMITDVFNRLVNSCHTKCISSTPLNHRYAEGDLLKGESVCIDRCTAKFFEVNKKVGERMSAMGSAAQATGSFGR.

A Twin CX3C motif motif is present at residues 42–72 (CHTKCISSTPLNHRYAEGDLLKGESVCIDRC). Intrachain disulfides connect cysteine 42-cysteine 72 and cysteine 46-cysteine 68.

Belongs to the small Tim family. Heterohexamer; composed of 3 copies of TIM9 and 3 copies of TIM10, named soluble 70 kDa complex. Associates directly with the TIM22 complex, whose core is composed of TIM22 and TIM54. Interacts with the transmembrane regions of multi-pass transmembrane proteins in transit.

The protein resides in the mitochondrion inner membrane. Mitochondrial intermembrane chaperone that participates in the import and insertion of multi-pass transmembrane proteins into the mitochondrial inner membrane. Also required for the transfer of beta-barrel precursors from the TOM complex to the sorting and assembly machinery (SAM complex) of the outer membrane. Acts as a chaperone-like protein that protects the hydrophobic precursors from aggregation and guide them through the mitochondrial intermembrane space. The chain is Mitochondrial import inner membrane translocase subunit TIM10 (TIM10) from Cryptococcus neoformans var. neoformans serotype D (strain B-3501A) (Filobasidiella neoformans).